The following is a 329-amino-acid chain: NTD biosynthesis operon regulator NtdR (329 aa).

The region spanning 2–56 (PTIDEIAKLCNVSKTTVSRVLNNHPYVSKEKRDMILKAINELDYTPNYLARNFRR) is the HTH lacI-type domain. Residues 4–23 (IDEIAKLCNVSKTTVSRVLN) constitute a DNA-binding region (H-T-H motif).

In terms of biological role, positively regulates the ntdABC operon and negatively regulates its own transcription. Binds to NTD to induce ntdABC transcription. This Bacillus subtilis (strain 168) protein is NTD biosynthesis operon regulator NtdR (ntdR).